The sequence spans 102 residues: Acid shock protein (102 aa).

Residues Met-1 to Ala-21 form the signal peptide. Residues Ala-22–Lys-41 show a composition bias toward low complexity. The propeptide occupies Ala-22–Gln-58. Positions Ala-22–Ala-102 are disordered. Residues Ala-80 to His-90 show a composition bias toward basic residues. Positions Gln-91–Ala-102 are enriched in low complexity.

This sequence belongs to the Asr family. Post-translationally, proteolytic processing gives rise to the active protein.

The protein localises to the periplasm. Required for growth and/or survival at acidic conditions. This chain is Acid shock protein, found in Escherichia coli (strain 55989 / EAEC).